The sequence spans 67 residues: DNA-directed RNA polymerase subunit omega (67 aa).

Belongs to the RNA polymerase subunit omega family. As to quaternary structure, the RNAP catalytic core consists of 2 alpha, 1 beta, 1 beta' and 1 omega subunit. When a sigma factor is associated with the core the holoenzyme is formed, which can initiate transcription.

The enzyme catalyses RNA(n) + a ribonucleoside 5'-triphosphate = RNA(n+1) + diphosphate. In terms of biological role, promotes RNA polymerase assembly. Latches the N- and C-terminal regions of the beta' subunit thereby facilitating its interaction with the beta and alpha subunits. The sequence is that of DNA-directed RNA polymerase subunit omega from Ralstonia pickettii (strain 12J).